A 387-amino-acid polypeptide reads, in one-letter code: Tetratricopeptide repeat protein 4 (387 aa).

The residue at position 1 (methionine 1) is an N-acetylmethionine. 2 positions are modified to phosphoserine: serine 47 and serine 51. TPR repeat units lie at residues 79 to 112 (AKTY…KCAD), 117 to 150 (AVLY…KPCH), and 151 to 184 (LKAI…DAKE). A Phosphoserine modification is found at serine 243.

The protein belongs to the TTC4 family. As to quaternary structure, interacts (via TPR repeats) with HSP90AB1. Interacts with HSPA8 and CDC6. Interacts with TBK1. Interacts with MSL1. As to expression, highly expressed in proliferating tissue and tumor cell lines but not in normal cell lines.

The protein resides in the nucleus. It is found in the nucleoplasm. The protein localises to the cytoplasm. Functionally, may act as a co-chaperone for HSP90AB1. Promotes Sendai virus (SeV)-induced host cell innate immune responses. The chain is Tetratricopeptide repeat protein 4 (TTC4) from Homo sapiens (Human).